A 77-amino-acid chain; its full sequence is Sec-independent protein translocase protein TatA (77 aa).

The helical transmembrane segment at 1–21 threads the bilayer; the sequence is MGSFSIWHWLVVLAIVVLVFG. The segment at 40–77 is disordered; that stretch reads KEGMKGAEEENTQPPPSHQQVTGHSIKSEIEEKDQTKV. Residues 65–77 show a composition bias toward basic and acidic residues; it reads IKSEIEEKDQTKV.

The protein belongs to the TatA/E family. As to quaternary structure, the Tat system comprises two distinct complexes: a TatABC complex, containing multiple copies of TatA, TatB and TatC subunits, and a separate TatA complex, containing only TatA subunits. Substrates initially bind to the TatABC complex, which probably triggers association of the separate TatA complex to form the active translocon.

The protein resides in the cell inner membrane. Its function is as follows. Part of the twin-arginine translocation (Tat) system that transports large folded proteins containing a characteristic twin-arginine motif in their signal peptide across membranes. TatA could form the protein-conducting channel of the Tat system. This Nitrosomonas eutropha (strain DSM 101675 / C91 / Nm57) protein is Sec-independent protein translocase protein TatA.